Reading from the N-terminus, the 626-residue chain is Phosphomethylpyrimidine synthase (626 aa).

Residues 92 to 106 (AREVKPEDNGLKGPD) show a composition bias toward basic and acidic residues. The interval 92-117 (AREVKPEDNGLKGPDRSAGVPPFPNV) is disordered. Substrate-binding positions include asparagine 219, methionine 248, tyrosine 277, histidine 313, 333–335 (SRG), 374–377 (DGLR), and glutamate 413. Residue histidine 417 coordinates Zn(2+). Tyrosine 440 is a substrate binding site. Histidine 481 lines the Zn(2+) pocket. Residues cysteine 561, cysteine 564, and cysteine 569 each contribute to the [4Fe-4S] cluster site.

Belongs to the ThiC family. Homodimer. [4Fe-4S] cluster is required as a cofactor.

The catalysed reaction is 5-amino-1-(5-phospho-beta-D-ribosyl)imidazole + S-adenosyl-L-methionine = 4-amino-2-methyl-5-(phosphooxymethyl)pyrimidine + CO + 5'-deoxyadenosine + formate + L-methionine + 3 H(+). It participates in cofactor biosynthesis; thiamine diphosphate biosynthesis. Its function is as follows. Catalyzes the synthesis of the hydroxymethylpyrimidine phosphate (HMP-P) moiety of thiamine from aminoimidazole ribotide (AIR) in a radical S-adenosyl-L-methionine (SAM)-dependent reaction. This Novosphingobium aromaticivorans (strain ATCC 700278 / DSM 12444 / CCUG 56034 / CIP 105152 / NBRC 16084 / F199) protein is Phosphomethylpyrimidine synthase.